The primary structure comprises 283 residues: Thymidylate synthase (283 aa).

Residue R22 participates in dUMP binding. The Nucleophile role is filled by C160. DUMP is bound by residues 180–183, N191, and 221–223; these read RSCD and HIY. (6R)-5,10-methylene-5,6,7,8-tetrahydrofolate is bound at residue D183. S282 provides a ligand contact to (6R)-5,10-methylene-5,6,7,8-tetrahydrofolate.

The protein belongs to the thymidylate synthase family. Bacterial-type ThyA subfamily. As to quaternary structure, homodimer.

It localises to the cytoplasm. The catalysed reaction is dUMP + (6R)-5,10-methylene-5,6,7,8-tetrahydrofolate = 7,8-dihydrofolate + dTMP. The protein operates within pyrimidine metabolism; dTTP biosynthesis. In terms of biological role, catalyzes the reductive methylation of 2'-deoxyuridine-5'-monophosphate (dUMP) to 2'-deoxythymidine-5'-monophosphate (dTMP) while utilizing 5,10-methylenetetrahydrofolate (mTHF) as the methyl donor and reductant in the reaction, yielding dihydrofolate (DHF) as a by-product. This enzymatic reaction provides an intracellular de novo source of dTMP, an essential precursor for DNA biosynthesis. The protein is Thymidylate synthase of Histophilus somni (strain 129Pt) (Haemophilus somnus).